The following is a 509-amino-acid chain: Dihydrolipoyl dehydrogenase, mitochondrial (509 aa).

The N-terminal 35 residues, 1-35 (MQSWSRVYCSLAKKGHFNRLSHGLQGASSVPLRTY), are a transit peptide targeting the mitochondrion. Lysine 66 carries the post-translational modification N6-acetyllysine; alternate. Position 66 is an N6-succinyllysine; alternate (lysine 66). Residues 71 to 80 (EKNETLGGTC) and lysine 89 each bind FAD. The cysteines at positions 80 and 85 are disulfide-linked. Residues lysine 104, lysine 122, lysine 132, and lysine 143 each carry the N6-acetyllysine; alternate modification. N6-succinyllysine; alternate occurs at positions 104, 122, 132, and 143. Glycine 154 is a binding site for FAD. Lysine 159 is modified (N6-succinyllysine). 183 to 185 (TGS) contributes to the FAD binding site. Residues 220-227 (GAGVIGVE) and glutamate 243 contribute to the NAD(+) site. Residues lysine 273 and lysine 277 each carry the N6-succinyllysine modification. Valine 278 contributes to the NAD(+) binding site. 2 positions are modified to phosphoserine: serine 285 and serine 297. Residue glycine 314 participates in NAD(+) binding. Lysine 346 is modified (N6-acetyllysine). Residues aspartate 355 and 361–364 (MLAH) contribute to the FAD site. At lysine 410 the chain carries N6-acetyllysine; alternate. Residue lysine 410 is modified to N6-succinyllysine; alternate. An N6-acetyllysine mark is found at lysine 417 and lysine 420. Lysine 430 is subject to N6-succinyllysine. The active-site Proton acceptor is the histidine 487. Serine 502 bears the Phosphoserine mark. At lysine 505 the chain carries N6-acetyllysine; alternate. Lysine 505 is subject to N6-succinyllysine; alternate.

The protein belongs to the class-I pyridine nucleotide-disulfide oxidoreductase family. In terms of assembly, homodimer. Part of the multimeric pyruvate dehydrogenase complex that contains multiple copies of pyruvate dehydrogenase (subunits PDHA (PDHA1 or PDHA2) and PDHB, E1), dihydrolipoamide acetyltransferase (DLAT, E2) and lipoamide dehydrogenase (DLD, E3). These subunits are bound to an inner core composed of about 48 DLAT and 12 PDHX molecules (by non covalent bonds). The 2-oxoglutarate dehydrogenase complex is composed of OGDH (2-oxoglutarate dehydrogenase; E1), DLST (dihydrolipoamide succinyltransferase; E2), DLD (dihydrolipoamide dehydrogenase; E3) and the assembly factor KGD4. It contains multiple copies of the three enzymatic components (E1, E2 and E3). In the nucleus, the 2-oxoglutarate dehydrogenase complex associates with KAT2A. Interacts with PDHX. Requires FAD as cofactor. Tyrosine phosphorylated.

It localises to the mitochondrion matrix. The protein localises to the nucleus. Its subcellular location is the cell projection. It is found in the cilium. The protein resides in the flagellum. It localises to the cytoplasmic vesicle. The protein localises to the secretory vesicle. Its subcellular location is the acrosome. The catalysed reaction is N(6)-[(R)-dihydrolipoyl]-L-lysyl-[protein] + NAD(+) = N(6)-[(R)-lipoyl]-L-lysyl-[protein] + NADH + H(+). Lipoamide dehydrogenase is a component of the glycine cleavage system as well as an E3 component of three alpha-ketoacid dehydrogenase complexes (pyruvate-, alpha-ketoglutarate-, and branched-chain amino acid-dehydrogenase complex). The 2-oxoglutarate dehydrogenase complex is mainly active in the mitochondrion. A fraction of the 2-oxoglutarate dehydrogenase complex also localizes in the nucleus and is required for lysine succinylation of histones: associates with KAT2A on chromatin and provides succinyl-CoA to histone succinyltransferase KAT2A. In monomeric form may have additional moonlighting function as serine protease. Involved in the hyperactivation of spermatazoa during capacitation and in the spermatazoal acrosome reaction. The polypeptide is Dihydrolipoyl dehydrogenase, mitochondrial (Dld) (Rattus norvegicus (Rat)).